The chain runs to 596 residues: Cis-3-hydroxy-L-proline dehydratase (596 aa).

Ser-67 (proton acceptor) is an active-site residue.

It belongs to the AcnX family. Monomer. Requires Fe(3+) as cofactor.

It catalyses the reaction cis-3-hydroxy-L-proline = 1-pyrroline-2-carboxylate + H2O. With respect to regulation, inhibited by Zn(2+). Not inhibited by pyrrole-2-carboxylate nor its derivative 2-thiophenecarboxylate. In terms of biological role, catalyzes the dehydration of cis-3-hydroxy-L-proline (c3LHyp) to Delta(1)-pyrroline-2-carboxylate (Pyr2C). No activity with L-proline, trans-4-hydroxy-L-proline (t4LHyp), cis-4-hydroxy-L-proline (c4LHyp), trans-3-hydroxy-L-proline (t3LHyp), D-proline, cis-4-hydroxy-D-proline (c4DHyp), trans-4-hydroxy-D-proline (t4DHyp) or L-serine as substrates. Because of the low catalytic efficiency, C3LHyp is likely not a main physiological substrate of this enzyme in H.jecorina. The protein is Cis-3-hydroxy-L-proline dehydratase of Hypocrea jecorina (strain QM6a) (Trichoderma reesei).